The sequence spans 250 residues: NAD(P)H-quinone oxidoreductase subunit K (250 aa).

Positions 60, 61, 125, and 156 each coordinate [4Fe-4S] cluster. Residues 230-250 are disordered; the sequence is ELNTPEIDVSPASQSSSTYES. The span at 240 to 250 shows a compositional bias: polar residues; the sequence is PASQSSSTYES.

The protein belongs to the complex I 20 kDa subunit family. NDH-1 can be composed of about 15 different subunits; different subcomplexes with different compositions have been identified which probably have different functions. It depends on [4Fe-4S] cluster as a cofactor.

Its subcellular location is the cellular thylakoid membrane. It catalyses the reaction a plastoquinone + NADH + (n+1) H(+)(in) = a plastoquinol + NAD(+) + n H(+)(out). It carries out the reaction a plastoquinone + NADPH + (n+1) H(+)(in) = a plastoquinol + NADP(+) + n H(+)(out). In terms of biological role, NDH-1 shuttles electrons from an unknown electron donor, via FMN and iron-sulfur (Fe-S) centers, to quinones in the respiratory and/or the photosynthetic chain. The immediate electron acceptor for the enzyme in this species is believed to be plastoquinone. Couples the redox reaction to proton translocation, and thus conserves the redox energy in a proton gradient. Cyanobacterial NDH-1 also plays a role in inorganic carbon-concentration. In Prochlorococcus marinus (strain MIT 9313), this protein is NAD(P)H-quinone oxidoreductase subunit K.